The chain runs to 260 residues: Putative ABC transporter ATP-binding protein PH0132 (260 aa).

The ABC transporter domain maps to 2-234; it reads IEFRDVWFWY…DLEGFGLKEP (233 aa). Position 34-41 (34-41) interacts with ATP; it reads GPNGSGKT.

Belongs to the ABC transporter superfamily.

It is found in the cell membrane. In terms of biological role, probably part of an ABC transporter complex. Responsible for energy coupling to the transport system. The protein is Putative ABC transporter ATP-binding protein PH0132 of Pyrococcus horikoshii (strain ATCC 700860 / DSM 12428 / JCM 9974 / NBRC 100139 / OT-3).